The sequence spans 611 residues: Zinc metalloproteinase-disintegrin-like MTP9 (611 aa).

The signal sequence occupies residues 1-20 (MIEVLLVTICFTVFPYQGSS). Residues 21–191 (IILESGNVND…DEPIEKISQL (171 aa)) constitute a propeptide that is removed on maturation. Residues 205–401 (KYIELYVVVD…VRPQCILNKP (197 aa)) enclose the Peptidase M12B domain. Glu-208 is a Ca(2+) binding site. Asn-282 is a glycosylation site (N-linked (GlcNAc...) asparagine). Asp-292 is a Ca(2+) binding site. Cystine bridges form between Cys-316/Cys-396, Cys-356/Cys-380, and Cys-358/Cys-363. His-341, His-345, and His-351 together coordinate Zn(2+). Ca(2+)-binding residues include Cys-396, Asn-399, Asn-414, Phe-416, Glu-418, Glu-421, and Asp-424. One can recognise a Disintegrin domain in the interval 409–493 (PPVCGNYFVE…ECPTDSFQRN (85 aa)). 15 cysteine pairs are disulfide-bonded: Cys-412–Cys-441, Cys-423–Cys-436, Cys-425–Cys-431, Cys-435–Cys-456, Cys-447–Cys-453, Cys-452–Cys-478, Cys-465–Cys-485, Cys-472–Cys-504, Cys-497–Cys-509, Cys-516–Cys-566, Cys-531–Cys-573, Cys-541–Cys-575, Cys-544–Cys-554, Cys-561–Cys-599, and Cys-593–Cys-604. The D/ECD-tripeptide signature appears at 471–473 (DCD). Residues Asp-473, Leu-474, Glu-476, and Asp-488 each contribute to the Ca(2+) site. Residues Asn-548 and Asn-570 are each glycosylated (N-linked (GlcNAc...) asparagine).

The protein belongs to the venom metalloproteinase (M12B) family. P-III subfamily. In terms of assembly, monomer. Requires Zn(2+) as cofactor. Expressed by the venom gland.

It is found in the secreted. Its function is as follows. Snake venom zinc metalloproteinase that may impair hemostasis in the prey. The chain is Zinc metalloproteinase-disintegrin-like MTP9 from Drysdalia coronoides (White-lipped snake).